The sequence spans 206 residues: Ras-related protein ralB-B (206 aa).

21–28 (GSGGVGKS) serves as a coordination point for GTP. Positions 43 to 51 (YEPTKADSY) match the Effector region motif. GTP-binding positions include 68–72 (DTAGQ) and 128–131 (NKSD). The span at 180–189 (KMSENKDKNG) shows a compositional bias: basic and acidic residues. Residues 180–206 (KMSENKDKNGKKSGKSKKGFKQRCCLL) are disordered. Residues 190-200 (KKSGKSKKGFK) are compositionally biased toward basic residues. At cysteine 203 the chain carries Cysteine methyl ester. The S-geranylgeranyl cysteine moiety is linked to residue cysteine 203. A propeptide spans 204–206 (CLL) (removed in mature form).

It belongs to the small GTPase superfamily. Ras family. Interacts with ralbp1 and rap1gds1.

The protein localises to the cell membrane. The protein resides in the midbody. It catalyses the reaction GTP + H2O = GDP + phosphate + H(+). In terms of biological role, multifunctional GTPase involved in a variety of cellular processes including gene expression, cell migration, cell proliferation, oncogenic transformation and membrane trafficking. Accomplishes its multiple functions by interacting with distinct downstream effectors. Acts as a GTP sensor for GTP-dependent exocytosis of dense core vesicles. Required both to stabilize the assembly of the exocyst complex and to localize functional exocyst complexes to the leading edge of migrating cells. Required for suppression of apoptosis. In late stages of cytokinesis, upon completion of the bridge formation between dividing cells, mediates exocyst recruitment to the midbody to drive abscission. Regulates the actin cytoskeleton to play a role in gastrulation or neurulation. During the cleavage stages, the GTP-bound form induces a cortical reaction that affects the localization of pigment granules. Activated by the FGF pathway via ras and ral-GDS, but independently of raf. Directs ralbp1 to the plasma membrane. Involved in ligand-dependent receptor mediated endocytosis of the EGF and insulin receptors. The protein is Ras-related protein ralB-B (ralb-b) of Xenopus laevis (African clawed frog).